A 104-amino-acid polypeptide reads, in one-letter code: Large ribosomal subunit protein uL24 (104 aa).

It belongs to the universal ribosomal protein uL24 family. As to quaternary structure, part of the 50S ribosomal subunit.

Functionally, one of two assembly initiator proteins, it binds directly to the 5'-end of the 23S rRNA, where it nucleates assembly of the 50S subunit. In terms of biological role, one of the proteins that surrounds the polypeptide exit tunnel on the outside of the subunit. The chain is Large ribosomal subunit protein uL24 from Flavobacterium johnsoniae (strain ATCC 17061 / DSM 2064 / JCM 8514 / BCRC 14874 / CCUG 350202 / NBRC 14942 / NCIMB 11054 / UW101) (Cytophaga johnsonae).